A 584-amino-acid chain; its full sequence is Chondroitin proteoglycan 1 (584 aa).

An N-terminal signal peptide occupies residues 1–17; sequence MTLKPVLLAFLVASAYA. A glycan (O-linked (Xyl...) (chondroitin sulfate) serine) is linked at Ser50. Chitin-binding type-2 domains follow at residues 58-115, 211-268, and 524-578; these read DTDC…QCGG, TKSC…ECTN, and VPAC…ECHQ. 2 disulfides stabilise this stretch: Cys91/Cys104 and Cys244/Cys257. Positions 267–295 are disordered; the sequence is TNGSGNDEGSADETTPESSGEMPYSNGYG. Residue Asn268 is glycosylated (N-linked (GlcNAc...) asparagine). Cys554 and Cys567 are joined by a disulfide.

Expressed in the germline.

Required for polar body extrusion during cytokinesis in embryo development. Affects cortical granule size. Has roles in meiotic chromosome segregation, osmotic barrier function and polarization in conjunction with cpg-2. Binds chitin. The sequence is that of Chondroitin proteoglycan 1 (cpg-1) from Caenorhabditis elegans.